Consider the following 293-residue polypeptide: Short-chain dehydrogenase/reductase PhomF' (293 aa).

NADP(+) is bound by residues isoleucine 31 and asparagine 102. Catalysis depends on serine 175, which acts as the Proton donor. NADP(+)-binding residues include tyrosine 190, lysine 194, and serine 225. Tyrosine 190 (proton acceptor) is an active-site residue. Lysine 194 (lowers pKa of active site Tyr) is an active-site residue.

Belongs to the short-chain dehydrogenases/reductases (SDR) family.

In terms of biological role, short-chain dehydrogenase/reductase; part of the gene cluster that mediates the biosynthesis of the phomopsins, a group of hexapeptide mycotoxins which infects lupins and causes lupinosis disease in livestock. The role of phomF' within the phomopsins biosynthesis pathway has still to be determined. The pathway starts with the processing of the precursor phomA by several endopeptidases including kexin proteases as well as the cluster-specific S41 family peptidase phomP1 and the oligopeptidase phomG to produce 10 identical copies of the hexapeptide Tyr-Val-Ile-Pro-Ile-Asp. After being excised from the precursor peptide, the core peptides are cyclized and modified post-translationally by enzymes encoded within the gene cluster. The timing and order of proteolysis of the phomA precursor and PTMs are still unknown. Two tyrosinase-like enzymes, phomQ1 and phomQ2, catalyze the chlorination and hydroxylation of Tyr, respectively. PhomYb, is proposed to be involved in the construction of the macrocyclic structure. The other 4 ustYa family proteins may be involved in PTMs that generate the unique structure of phomopsin A. PhomYa is required for the hydroxylation of C-beta of Tyr. PhomYc, phomYd, and phomYe are responsible for the biosynthesis of 2,3-dehydroisoleucine (dIle), 2,3-dehydroaspartic acid (dAsp), and 3,4-dehydroproline (dPro), respectively. While dIle formation by phomYc is indispensable for the installation of dAsp by phomYd, the order of the other PTMs have not been elucidated yet. Most of the biosynthetic enzymes likely have broad substrate specificity, and thus, there might be a metabolic grid from a precursor to phomopsin A. The enzyme(s) responsible for the biosynthesis of 3,4-dehydrovaline (dVal) have also not been identified yet. Finally, phomM acts as an S-adenosylmethionine-dependent alpha-N-methyltransferase that catalyzes two successive N-methylation reactions, converting N-desmethyl-phomopsin A to phomopsin A and phomopsin A further to an N,N-dimethylated congener called phomopsin E. The chain is Short-chain dehydrogenase/reductase PhomF' from Diaporthe leptostromiformis (Lupinosis disease fungus).